The primary structure comprises 458 residues: Fumarate hydratase class II 2 (458 aa).

Substrate contacts are provided by residues 98-100 (SGT), 123-126 (NPND), 133-135 (SSN), and Thr181. His182 serves as the catalytic Proton donor/acceptor. The active site involves Ser312. Substrate-binding positions include Ser313 and 318 to 320 (KVN).

Belongs to the class-II fumarase/aspartase family. Fumarase subfamily. As to quaternary structure, homotetramer.

Its subcellular location is the cytoplasm. It carries out the reaction (S)-malate = fumarate + H2O. Its pathway is carbohydrate metabolism; tricarboxylic acid cycle; (S)-malate from fumarate: step 1/1. Functionally, involved in the TCA cycle. Catalyzes the stereospecific interconversion of fumarate to L-malate. This is Fumarate hydratase class II 2 from Pseudomonas aeruginosa (strain ATCC 15692 / DSM 22644 / CIP 104116 / JCM 14847 / LMG 12228 / 1C / PRS 101 / PAO1).